The sequence spans 199 residues: Elongation factor Ts (199 aa).

The segment at 82–85 (TDFV) is involved in Mg(2+) ion dislocation from EF-Tu.

This sequence belongs to the EF-Ts family.

The protein resides in the cytoplasm. In terms of biological role, associates with the EF-Tu.GDP complex and induces the exchange of GDP to GTP. It remains bound to the aminoacyl-tRNA.EF-Tu.GTP complex up to the GTP hydrolysis stage on the ribosome. This chain is Elongation factor Ts, found in Leptospira interrogans serogroup Icterohaemorrhagiae serovar Lai (strain 56601).